Here is a 380-residue protein sequence, read N- to C-terminus: MGSKLINVEGGNNQDDNKYNSNNVISINNKVNKNDYFIETNKELKINLNFQNNNIISNIFSNINIYDKISNIFINNKKTYMLKYNNNINEENFFISYFEKKDDNFVPISPWHHIDLKNDDGTYNMIVEITKYNYIKLEIQLREKFNVIKQDKKKGKLRYYHNSIYWNYGALPQTYEYPKHIYQNKSKKNKEALLFTGDNDPLDILDIGSACLKIGQVVPVKILGAFTLIDEGELDWKIIAINKEDKHYEDINSLSDIEKYYPHTLSLLLEWFRSYKMADTKKLNLISKQLYDKKESEDLIMKTHHYYLEFREDVKKLKEEHSKETIKEHDYVNAQNIQFNYDKLNNNDDEPMENNLLEDINITYYKSDSAYKPDLNIWTP.

The Mg(2+) site is built by aspartate 198, aspartate 203, and aspartate 235.

The protein belongs to the PPase family. The cofactor is Mg(2+).

The catalysed reaction is diphosphate + H2O = 2 phosphate + H(+). This is Probable inorganic pyrophosphatase from Plasmodium falciparum (isolate 3D7).